The primary structure comprises 421 residues: 3-isopropylmalate dehydratase large subunit (421 aa).

[4Fe-4S] cluster is bound by residues cysteine 300, cysteine 360, and cysteine 363.

This sequence belongs to the aconitase/IPM isomerase family. LeuC type 2 subfamily. In terms of assembly, heterodimer of LeuC and LeuD. Requires [4Fe-4S] cluster as cofactor.

It catalyses the reaction (2R,3S)-3-isopropylmalate = (2S)-2-isopropylmalate. Its pathway is amino-acid biosynthesis; L-leucine biosynthesis; L-leucine from 3-methyl-2-oxobutanoate: step 2/4. In terms of biological role, catalyzes the isomerization between 2-isopropylmalate and 3-isopropylmalate, via the formation of 2-isopropylmaleate. This is 3-isopropylmalate dehydratase large subunit from Moorella thermoacetica (strain ATCC 39073 / JCM 9320).